Consider the following 267-residue polypeptide: Short chain dehydrogenase claC (267 aa).

Residues Ile-27, Asp-73, Asn-100, and Arg-133 each coordinate NADP(+). Residues Ser-149 and Ser-150 each act as proton donor in the active site. Residues Tyr-164, Lys-168, and Thr-199 each coordinate NADP(+). Residue Tyr-164 is the Proton acceptor of the active site. The active-site Lowers pKa of active site Tyr is the Lys-168.

Belongs to the short-chain dehydrogenases/reductases (SDR) family.

Its pathway is pigment biosynthesis. Non-reducing polyketide synthase; part of the gene cluster that mediates the biosynthesis of the bianthraquinone cladofulvin, a conidial pigment not required for virulence but that plays a role in fitness and resistance to environmental stresses including UV light and low-temperature stress. The pathway begins with the synthesis of atrochrysone thioester by the polyketide synthase (PKS) claG. The atrochrysone carboxyl ACP thioesterase claF then breaks the thioester bond and releases the atrochrysone carboxylic acid from claG. This compound is decarboxylated by claH to yield emodin, which is further converted to chrysophanol hydroquinone by the reductase claC and the dehydratase claB. The cytochrome monooxygenase P450 claM then catalyzes the dimerization of nataloe-emodin to cladofulvin. This chain is Short chain dehydrogenase claC, found in Passalora fulva (Tomato leaf mold).